Reading from the N-terminus, the 151-residue chain is Putative pre-16S rRNA nuclease (151 aa).

The protein belongs to the YqgF nuclease family.

The protein resides in the cytoplasm. In terms of biological role, could be a nuclease involved in processing of the 5'-end of pre-16S rRNA. In Myxococcus xanthus (strain DK1622), this protein is Putative pre-16S rRNA nuclease.